The following is a 338-amino-acid chain: Ketol-acid reductoisomerase (NADP(+)) (338 aa).

The 181-residue stretch at 1–181 folds into the KARI N-terminal Rossmann domain; it reads MKVFYDKDCD…GGGRTGIIET (181 aa). Residues 24-27, arginine 47, serine 50, threonine 52, and 82-85 each bind NADP(+); these read YGSQ and DEFQ. Residue histidine 107 is part of the active site. An NADP(+)-binding site is contributed by glycine 133. The KARI C-terminal knotted domain maps to 182–327; it reads TFKDETETDL…EQLRSMMPWI (146 aa). 4 residues coordinate Mg(2+): aspartate 190, glutamate 194, glutamate 226, and glutamate 230. Serine 251 provides a ligand contact to substrate.

Belongs to the ketol-acid reductoisomerase family. The cofactor is Mg(2+).

The catalysed reaction is (2R)-2,3-dihydroxy-3-methylbutanoate + NADP(+) = (2S)-2-acetolactate + NADPH + H(+). It catalyses the reaction (2R,3R)-2,3-dihydroxy-3-methylpentanoate + NADP(+) = (S)-2-ethyl-2-hydroxy-3-oxobutanoate + NADPH + H(+). Its pathway is amino-acid biosynthesis; L-isoleucine biosynthesis; L-isoleucine from 2-oxobutanoate: step 2/4. The protein operates within amino-acid biosynthesis; L-valine biosynthesis; L-valine from pyruvate: step 2/4. In terms of biological role, involved in the biosynthesis of branched-chain amino acids (BCAA). Catalyzes an alkyl-migration followed by a ketol-acid reduction of (S)-2-acetolactate (S2AL) to yield (R)-2,3-dihydroxy-isovalerate. In the isomerase reaction, S2AL is rearranged via a Mg-dependent methyl migration to produce 3-hydroxy-3-methyl-2-ketobutyrate (HMKB). In the reductase reaction, this 2-ketoacid undergoes a metal-dependent reduction by NADPH to yield (R)-2,3-dihydroxy-isovalerate. The polypeptide is Ketol-acid reductoisomerase (NADP(+)) (Pseudomonas entomophila (strain L48)).